We begin with the raw amino-acid sequence, 210 residues long: Nucleoside triphosphate pyrophosphatase (210 aa).

Asp-80 acts as the Proton acceptor in catalysis.

Belongs to the Maf family. It depends on a divalent metal cation as a cofactor.

It is found in the cytoplasm. It catalyses the reaction a ribonucleoside 5'-triphosphate + H2O = a ribonucleoside 5'-phosphate + diphosphate + H(+). The enzyme catalyses a 2'-deoxyribonucleoside 5'-triphosphate + H2O = a 2'-deoxyribonucleoside 5'-phosphate + diphosphate + H(+). Nucleoside triphosphate pyrophosphatase. May have a dual role in cell division arrest and in preventing the incorporation of modified nucleotides into cellular nucleic acids. The protein is Nucleoside triphosphate pyrophosphatase of Mycobacterium sp. (strain JLS).